The following is a 499-amino-acid chain: Glycerol kinase (499 aa).

ADP is bound at residue Thr-13. ATP-binding residues include Thr-13, Thr-14, and Ser-15. Thr-13 contributes to the sn-glycerol 3-phosphate binding site. An ADP-binding site is contributed by Arg-17. The sn-glycerol 3-phosphate site is built by Arg-83, Glu-84, Tyr-135, and Asp-245. Residues Arg-83, Glu-84, Tyr-135, Asp-245, and Gln-246 each coordinate glycerol. 2 residues coordinate ADP: Thr-267 and Gly-310. Residues Thr-267, Gly-310, Gln-314, and Gly-411 each coordinate ATP. Positions 411 and 415 each coordinate ADP.

This sequence belongs to the FGGY kinase family.

The catalysed reaction is glycerol + ATP = sn-glycerol 3-phosphate + ADP + H(+). Its pathway is polyol metabolism; glycerol degradation via glycerol kinase pathway; sn-glycerol 3-phosphate from glycerol: step 1/1. Inhibited by fructose 1,6-bisphosphate (FBP). In terms of biological role, key enzyme in the regulation of glycerol uptake and metabolism. Catalyzes the phosphorylation of glycerol to yield sn-glycerol 3-phosphate. The polypeptide is Glycerol kinase (Stenotrophomonas maltophilia (strain R551-3)).